The primary structure comprises 170 residues: Probable chemoreceptor glutamine deamidase CheD 3 (170 aa).

It belongs to the CheD family.

The catalysed reaction is L-glutaminyl-[protein] + H2O = L-glutamyl-[protein] + NH4(+). Functionally, probably deamidates glutamine residues to glutamate on methyl-accepting chemotaxis receptors (MCPs), playing an important role in chemotaxis. The protein is Probable chemoreceptor glutamine deamidase CheD 3 of Dechloromonas aromatica (strain RCB).